We begin with the raw amino-acid sequence, 194 residues long: Large ribosomal subunit protein eL15 (194 aa).

A disordered region spans residues 162-194; that stretch reads LTSAGRKSRGLRNKGKGAEKVRPSVRANKGKTK. Residues 167 to 176 are compositionally biased toward basic residues; that stretch reads RKSRGLRNKG.

The protein belongs to the eukaryotic ribosomal protein eL15 family.

This is Large ribosomal subunit protein eL15 from Thermococcus onnurineus (strain NA1).